Here is a 122-residue protein sequence, read N- to C-terminus: Small ribosomal subunit protein uS12c (122 aa).

This sequence belongs to the universal ribosomal protein uS12 family. In terms of assembly, part of the 30S ribosomal subunit.

The protein resides in the plastid. It localises to the chloroplast. Functionally, with S4 and S5 plays an important role in translational accuracy. Located at the interface of the 30S and 50S subunits. The protein is Small ribosomal subunit protein uS12c (rps12) of Cyanidioschyzon merolae (strain NIES-3377 / 10D) (Unicellular red alga).